Consider the following 247-residue polypeptide: Carboxy-S-adenosyl-L-methionine synthase (247 aa).

S-adenosyl-L-methionine-binding positions include tyrosine 39, 64 to 66 (GCS), 89 to 90 (DN), 117 to 118 (DI), asparagine 132, and arginine 199.

This sequence belongs to the class I-like SAM-binding methyltransferase superfamily. Cx-SAM synthase family. In terms of assembly, homodimer.

It carries out the reaction prephenate + S-adenosyl-L-methionine = carboxy-S-adenosyl-L-methionine + 3-phenylpyruvate + H2O. Its function is as follows. Catalyzes the conversion of S-adenosyl-L-methionine (SAM) to carboxy-S-adenosyl-L-methionine (Cx-SAM). The protein is Carboxy-S-adenosyl-L-methionine synthase of Escherichia coli O17:K52:H18 (strain UMN026 / ExPEC).